We begin with the raw amino-acid sequence, 423 residues long: Maltoporin 1 (423 aa).

Residues 1-24 form the signal peptide; sequence MITLRKLPIALAVAAGVLSTQAMA.

It belongs to the porin LamB (TC 1.B.3) family. As to quaternary structure, homotrimer formed of three 18-stranded antiparallel beta-barrels, containing three independent channels.

It localises to the cell outer membrane. The catalysed reaction is beta-maltose(in) = beta-maltose(out). Functionally, involved in the transport of maltose and maltodextrins. The protein is Maltoporin 1 of Yersinia pestis bv. Antiqua (strain Antiqua).